The sequence spans 918 residues: MKNKILNTVLISILLLVVVFFVSTNFIINVQWFKEVGYLNVFFTKLIAICKLFVPIFILYFCVIAIYLFTLRKSIRSLVGDTKFKSVKKYFLLSNLVISILGAGATATTQWYKILQFTNAVPFGEVDPIFNKDISFYVFKLPLVQSLFSTAISLIIILVLITVIIYLALGFKDKIYQNKDNVININSKTYGIRKFAGKQLAVLASVLSLLIGCSYLLKSYNLVYSTRGVSYGAGYTDVKITMIFYKVIAVACVISSIVVFISILKLKFRPIIISIASIAVLIVLEPVVAIFTQQFVVKPNEMELEKPYISYSIDATKKAFNIDEIEVKEMEPNENITSEKLEDNKDIIENLKVNSTGPLLSFYQQVQLIKNYYEFNDADTDRYNINGKYTQVFVSPREINRDSMTTWQNKHLRYTHGYGLAMSRVNSVTEFGQPDFVMKDIPTVNTTDINLENPRIYFGESDNDYVIVNTEGGEFDYPTGDTENTFNYNGTGGLKMTPFNRVLFSIYERNPKILMSSSITSESRIILNRNIVKRVQEIAPFLTYDSDPYIVVHDGRLVWMMDAYTSTDKYPFSEPHEGVNYIRNSVKVVVDAFNGNVDFYVTDENDPIINCYLKIYKGLFKPLSEMPEDLKEHFRYPQDLFELQSKVLTKYHVDDPIKLFTEEDLWDRSLEVVKHGGENLSQGDEGKEESILNKAKENKNNEAENEGLYLMTKLPDEENVEMMLLDYFNMRGKQSMVALLGARMDGDNYGELVMYKFPPQRTIYSPILFKNRIQQDPNISKEISLWAGKGSEVIYGDIIIVPIEDSLLYLNTIYLKANSENSMPEMKRVILSNGDKIVIEENIEKALLKLFNYSSSEENKNSNKDETPKNEITSDNSGIKEAADLFNKAIEAQKNGDWATYGEFINKLGDILNKMSQE.

The next 7 membrane-spanning stretches (helical) occupy residues 8–28 (TVLI…NFII), 46–66 (LIAI…VIAI), 91–111 (FLLS…TTQW), 151–171 (AISL…ALGF), 200–220 (LAVL…LKSY), 243–263 (IFYK…FISI), and 271–291 (IIIS…VAIF). Residues 857–869 (EENKNSNKDETPK) show a composition bias toward basic and acidic residues. The segment at 857-876 (EENKNSNKDETPKNEITSDN) is disordered.

Belongs to the UPF0182 family.

It localises to the cell membrane. The chain is UPF0182 protein CPF_0011 from Clostridium perfringens (strain ATCC 13124 / DSM 756 / JCM 1290 / NCIMB 6125 / NCTC 8237 / Type A).